Consider the following 320-residue polypeptide: Lipoyl synthase (320 aa).

[4Fe-4S] cluster is bound by residues Cys67, Cys72, Cys78, Cys93, Cys97, Cys100, and Ser307. The Radical SAM core domain maps to 79 to 296 (FNHGTATFMI…RDKANEMGFE (218 aa)).

This sequence belongs to the radical SAM superfamily. Lipoyl synthase family. Requires [4Fe-4S] cluster as cofactor.

It is found in the cytoplasm. It carries out the reaction [[Fe-S] cluster scaffold protein carrying a second [4Fe-4S](2+) cluster] + N(6)-octanoyl-L-lysyl-[protein] + 2 oxidized [2Fe-2S]-[ferredoxin] + 2 S-adenosyl-L-methionine + 4 H(+) = [[Fe-S] cluster scaffold protein] + N(6)-[(R)-dihydrolipoyl]-L-lysyl-[protein] + 4 Fe(3+) + 2 hydrogen sulfide + 2 5'-deoxyadenosine + 2 L-methionine + 2 reduced [2Fe-2S]-[ferredoxin]. The protein operates within protein modification; protein lipoylation via endogenous pathway; protein N(6)-(lipoyl)lysine from octanoyl-[acyl-carrier-protein]: step 2/2. Its function is as follows. Catalyzes the radical-mediated insertion of two sulfur atoms into the C-6 and C-8 positions of the octanoyl moiety bound to the lipoyl domains of lipoate-dependent enzymes, thereby converting the octanoylated domains into lipoylated derivatives. The sequence is that of Lipoyl synthase from Haemophilus influenzae (strain 86-028NP).